A 358-amino-acid chain; its full sequence is Prostaglandin E2 receptor EP2 subtype (358 aa).

Residues 1-23 (MGNASNDSQSEDCETRQWLPPGE) are Extracellular-facing. N3 and N6 each carry an N-linked (GlcNAc...) asparagine glycan. A helical membrane pass occupies residues 24–47 (SPAISSVMFSAGVLGNLIALALLA). At 48–65 (RRWRGDVGCSAGRRSSLS) the chain is on the cytoplasmic side. Residues 66-91 (LFHVLVTELVFTDLLGTCLISPVVLA) form a helical membrane-spanning segment. Residues 92–111 (SYARNQTLVALAPESRACTY) lie on the Extracellular side of the membrane. N-linked (GlcNAc...) asparagine glycosylation occurs at N96. An intrachain disulfide couples C109 to C187. A helical membrane pass occupies residues 112-132 (FAFAMTFFSLATMLMLFAMAL). The Cytoplasmic segment spans residues 133–151 (ERYLSIGHPYFYQRRVSRS). A helical transmembrane segment spans residues 152–176 (GGLAVLPVIYAVSLLFCSLPLLDYG). The Extracellular segment spans residues 177-198 (QYVQYCPGTWCFIRHGRTAYLQ). Residues 199 to 223 (LYATLLLLLIVSVLACNFSVILNLI) form a helical membrane-spanning segment. Residues 224-262 (RMHRRSRRSRCGPSLGSGRGGPGARRRGERVSMAEETDH) are Cytoplasmic-facing. The segment at 231 to 253 (RSRCGPSLGSGRGGPGARRRGER) is disordered. Residues 263–286 (LILLAIMTITFAVCSLPFTIFAYM) form a helical membrane-spanning segment. A glycan (N-linked (GlcNAc...) asparagine) is linked at N287. Over 287–299 (NETSSRKEKWDLQ) the chain is Extracellular. A helical transmembrane segment spans residues 300–323 (ALRFLSINSIIDPWVFAILRPPVL). Topologically, residues 324 to 358 (RLMRSVLCCRISLRTQDATQTSCSTQSDASKQADL) are cytoplasmic.

It belongs to the G-protein coupled receptor 1 family. As to expression, placenta and lung.

The protein localises to the cell membrane. Its function is as follows. Receptor for prostaglandin E2 (PGE2). The activity of this receptor is mediated by G(s) proteins that stimulate adenylate cyclase. The subsequent raise in intracellular cAMP is responsible for the relaxing effect of this receptor on smooth muscle. This Homo sapiens (Human) protein is Prostaglandin E2 receptor EP2 subtype (PTGER2).